The chain runs to 83 residues: High-potential iron-sulfur protein (83 aa).

[4Fe-4S] cluster is bound by residues cysteine 43, cysteine 46, cysteine 61, and cysteine 75.

Belongs to the high-potential iron-sulfur protein (HiPIP) family. As to quaternary structure, homodimer.

Its subcellular location is the periplasm. Functionally, specific class of high-redox-potential 4Fe-4S ferredoxins. Functions in anaerobic electron transport in most purple and in some other photosynthetic bacteria and in at least one genus (Paracoccus) of halophilic, denitrifying bacteria. The sequence is that of High-potential iron-sulfur protein from Thiocystis violacea.